We begin with the raw amino-acid sequence, 426 residues long: Serine protease HTRA2, mitochondrial (426 aa).

The span at 31 to 58 (SSTCNSTNTDNGSHNTNYNSSNNNNNNN) shows a compositional bias: low complexity. The segment at 31–59 (SSTCNSTNTDNGSHNTNYNSSNNNNNNND) is disordered. Residues 71–87 (FLVPFSLGALASSVVAG) traverse the membrane as a helical segment. The short motif at 79–82 (ALAS) is the IAP-binding element. Residues 143–306 (SNGSGFVIEQ…IPIDYVKLFL (164 aa)) are serine protease. Active-site charge relay system residues include His-161, Asp-193, and Ser-270. Residues 329–414 (MGITMLTLTP…DLDMVILRGV (86 aa)) form the PDZ domain.

This sequence belongs to the peptidase S1C family. Interacts with th/DIAP1 (via BIR 2 domain).

The protein resides in the mitochondrion intermembrane space. It localises to the mitochondrion membrane. It catalyses the reaction Cleavage of non-polar aliphatic amino-acids at the P1 position, with a preference for Val, Ile and Met. At the P2 and P3 positions, Arg is selected most strongly with a secondary preference for other hydrophilic residues.. In terms of biological role, serine protease that shows proteolytic activity against a non-specific substrate beta-casein. Promotes or induces cell death either by direct binding to and inhibition of BIRC proteins (also called inhibitor of apoptosis proteins, IAPs), leading to an increase in caspase activity, or by a BIRC inhibition-independent, caspase-independent and serine protease activity-dependent mechanism. Can antagonize antiapoptotic activity of th/Diap1 by directly inducing the degradation of th/Diap1. The polypeptide is Serine protease HTRA2, mitochondrial (Drosophila grimshawi (Hawaiian fruit fly)).